A 270-amino-acid chain; its full sequence is MESGTSRTSDTGGTGRAGSTETSGSGDIARTLELLWDTGRRPSRGPKPTLTLDRVVEAAVQIADAEGLEGLSMRRVAAELGTGTMSLYRYVPGKGELLDLMLDRVQRPSENPADLGDGGWRAALEAMARETLALYRRHPWLLQVNQSRPILGPSAMDGMEKVLTLIRPMGLTDPELVSAIIMIDGYVVGAARSQLYQQEAERRTGLTDAEFWRAQVPMLEKVLASGRYPVMASLSEDTFGPDFDHFGFGLQRILDGLEVLVAQRRGESAP.

Low complexity predominate over residues 1–11 (MESGTSRTSDT). A disordered region spans residues 1–28 (MESGTSRTSDTGGTGRAGSTETSGSGDI). Residues 49–109 (TLTLDRVVEA…LMLDRVQRPS (61 aa)) enclose the HTH tetR-type domain. Residues 72 to 91 (SMRRVAAELGTGTMSLYRYV) constitute a DNA-binding region (H-T-H motif).

The protein resides in the cytoplasm. Daunorubicin and doxorubicin can induce dissociation of DrrR1 from its DNA complex. Ampicillin cannot release DrrR1 from the DNA complex at the same concentrations. Its function is as follows. Transcriptional regulator that modulates the expression of the drrA2-drrB2 genes, which encode an ABC transporter involved in daunorubicin efflux, in response to intracellular daunorubicin/doxorubicin accumulation. In the absence of daunorubicin or doxorubicin, binds directly to the drrA2-drrB2 promoter region and negatively regulates expression of the genes. In the presence of daunorubicin or doxorubicin, DrrR1 dissociates from DNA, leading to the transcription of the genes. The chain is HTH-type transcriptional repressor DrrR1 from Streptomyces coeruleorubidus.